A 208-amino-acid chain; its full sequence is Proheparin-binding EGF-like growth factor (208 aa).

A signal peptide spans 1–23 (MKLLPSVVLKLFLAAVLSALVTG). Residues 24 to 62 (ESLERLRRGLAAATSNPDPPTGTTNQLLPTGADRAQEVQ) constitute a propeptide that is removed on maturation. At 24–160 (ESLERLRRGL…ENPLYTYDHT (137 aa)) the chain is on the extracellular side. The tract at residues 82 to 103 (ALATPGKEKNGKKKRKGKGLGK) is disordered. T85 is a glycosylation site (O-linked (GalNAc...) threonine). A compositionally biased stretch (basic residues) spans 91-102 (NGKKKRKGKGLG). One can recognise an EGF-like domain in the interval 104–144 (KRDPCLKKYKDYCIHGECRYLKELRIPSCHCLPGYHGQRCH). 3 disulfide bridges follow: C108–C121, C116–C132, and C134–C143. Positions 149 to 208 (PVENPLYTYDHTTVLAVVAVVLSSVCLLVIVGLLMFRYHRRGGYDLESEEKVKLGMASSH) are cleaved as a propeptide — C-terminal. Residues 161–184 (TVLAVVAVVLSSVCLLVIVGLLMF) form a helical membrane-spanning segment. The Cytoplasmic segment spans residues 185–208 (RYHRRGGYDLESEEKVKLGMASSH).

Interacts with FBLN1. Interacts with EGFR and ERBB4. In terms of processing, O-glycosylated. As to expression, most abundant in skeletal muscle, lung, spleen brain and heart.

The protein resides in the secreted. It localises to the extracellular space. The protein localises to the cell membrane. Growth factor that mediates its effects via EGFR, ERBB2 and ERBB4. Required for normal cardiac valve formation and normal heart function. Promotes smooth muscle cell proliferation. May be involved in macrophage-mediated cellular proliferation. It is mitogenic for fibroblasts, but not endothelial cells. It is able to bind EGF receptor/EGFR with higher affinity than EGF itself and is a far more potent mitogen for smooth muscle cells than EGF. Also acts as a diphtheria toxin receptor. This chain is Proheparin-binding EGF-like growth factor (Hbegf), found in Rattus norvegicus (Rat).